Here is a 101-residue protein sequence, read N- to C-terminus: Urease subunit beta (101 aa).

This sequence belongs to the urease beta subunit family. As to quaternary structure, heterotrimer of UreA (gamma), UreB (beta) and UreC (alpha) subunits. Three heterotrimers associate to form the active enzyme.

Its subcellular location is the cytoplasm. The enzyme catalyses urea + 2 H2O + H(+) = hydrogencarbonate + 2 NH4(+). Its pathway is nitrogen metabolism; urea degradation; CO(2) and NH(3) from urea (urease route): step 1/1. This Hahella chejuensis (strain KCTC 2396) protein is Urease subunit beta.